The chain runs to 414 residues: MIAIMVLMQLCISKIVVVDDLGVTDKQNRDPDIARKVMNVLGGTIKNSRDTVLLSNSKGTKRIVGDDENASSAYDRGSQGEAKLFAKTNDDNKTNGRETHLRPSPSKPEYTGRPTQNLQVEDPVPEIGRGYQESSLLNPLHTRSLFNGDDQQIQGRNMYERPSMQSYDPENLLTPYDSNQGKYIPFSFGGTGDSFTGAPGYTEAPLEDRMGFGMGGNRNLSDEARARKSFIILKMAQSKQKESMLQSSIDKLLQDIDQVAEKIQDTQKMKDGMMSRLHTKKNHLRNLQINIKEVEVQRGRTLALIRLSRNELLKLSKMIDDQRSKLALLEDEEKIFSDRIKKYDEEYDVGNRELQLDETRTEEIKRSIEELERMYNVLKIRNNELLNERNKESAIRNKLEMEVERFDRSAIDFI.

Positions 87 to 117 are disordered; sequence KTNDDNKTNGRETHLRPSPSKPEYTGRPTQN. Basic and acidic residues predominate over residues 88–101; the sequence is TNDDNKTNGRETHL. Residues 243-405 are a coiled coil; it reads SMLQSSIDKL…RNKLEMEVER (163 aa).

This is an uncharacterized protein from Encephalitozoon cuniculi (strain GB-M1) (Microsporidian parasite).